Here is a 236-residue protein sequence, read N- to C-terminus: Acetate--CoA ligase [ADP-forming] II subunit beta (236 aa).

The ATP-grasp domain occupies K26–K62. A52–L63 lines the ATP pocket.

Belongs to the acetate CoA ligase beta subunit family. As to quaternary structure, heterotetramer of two alpha and two beta subunits.

It catalyses the reaction acetate + ATP + CoA = acetyl-CoA + ADP + phosphate. Its function is as follows. Catalyzes the reversible formation of acetate and ATP from acetyl-CoA by using ADP and phosphate. Can use other substrates such as phenylacetyl-CoA, indoleacetyl-CoA and isobutyryl-CoA, but not succinyl-CoA. Seems to be involved primarily in the degradation of aryl-CoA esters to the corresponding acids. Participates in the conversion of acetyl-CoA to acetate and in the degradation of branched-chain amino acids via branched-chain-acyl-CoA esters. This chain is Acetate--CoA ligase [ADP-forming] II subunit beta, found in Pyrococcus furiosus (strain ATCC 43587 / DSM 3638 / JCM 8422 / Vc1).